A 188-amino-acid polypeptide reads, in one-letter code: Peptidyl-tRNA hydrolase (188 aa).

Tyr14 is a tRNA binding site. His19 acts as the Proton acceptor in catalysis. Residues Tyr64, Asn66, and Asn112 each coordinate tRNA.

Belongs to the PTH family. As to quaternary structure, monomer.

The protein resides in the cytoplasm. It carries out the reaction an N-acyl-L-alpha-aminoacyl-tRNA + H2O = an N-acyl-L-amino acid + a tRNA + H(+). In terms of biological role, hydrolyzes ribosome-free peptidyl-tRNAs (with 1 or more amino acids incorporated), which drop off the ribosome during protein synthesis, or as a result of ribosome stalling. Functionally, catalyzes the release of premature peptidyl moieties from peptidyl-tRNA molecules trapped in stalled 50S ribosomal subunits, and thus maintains levels of free tRNAs and 50S ribosomes. The protein is Peptidyl-tRNA hydrolase of Bacillus velezensis (strain DSM 23117 / BGSC 10A6 / LMG 26770 / FZB42) (Bacillus amyloliquefaciens subsp. plantarum).